Here is a 379-residue protein sequence, read N- to C-terminus: Transcription termination factor Rho (379 aa).

Positions 1-68 (MTDKYGFLRS…KRIFQINGRF (68 aa)) constitute a Rho RNA-BD domain. ATP contacts are provided by residues 111–116 (GKGQRG), 123–128 (KTGKTT), and R154.

The protein belongs to the Rho family. As to quaternary structure, homohexamer. The homohexamer assembles into an open ring structure.

In terms of biological role, facilitates transcription termination by a mechanism that involves Rho binding to the nascent RNA, activation of Rho's RNA-dependent ATPase activity, and release of the mRNA from the DNA template. The chain is Transcription termination factor Rho from Karelsulcia muelleri (strain SMDSEM) (Sulcia muelleri).